Reading from the N-terminus, the 374-residue chain is Probable aminopeptidase YDR415C (374 aa).

A signal peptide spans 1–18 (MRIQSLFVLFNVAIIAWS). Residues His-177, Asp-196, Glu-235, Asp-262, and His-340 each coordinate Zn(2+).

The protein belongs to the peptidase M28 family. M28E subfamily. Zn(2+) is required as a cofactor.

This is Probable aminopeptidase YDR415C from Saccharomyces cerevisiae (strain ATCC 204508 / S288c) (Baker's yeast).